A 109-amino-acid chain; its full sequence is U-scoloptoxin(16)-Ssd1a (109 aa).

An N-terminal signal peptide occupies residues 1–23 (MTTSATVIIMVLCVGSLVIFSEG).

Contains 4 disulfide bonds. As to expression, expressed by the venom gland.

Its subcellular location is the secreted. In Scolopendra dehaani (Thai centipede), this protein is U-scoloptoxin(16)-Ssd1a.